Consider the following 363-residue polypeptide: Peptide chain release factor 2 (363 aa).

At Gln-251 the chain carries N5-methylglutamine.

This sequence belongs to the prokaryotic/mitochondrial release factor family. In terms of processing, methylated by PrmC. Methylation increases the termination efficiency of RF2.

Its subcellular location is the cytoplasm. In terms of biological role, peptide chain release factor 2 directs the termination of translation in response to the peptide chain termination codons UGA and UAA. The sequence is that of Peptide chain release factor 2 (prfB) from Helicobacter pylori (strain J99 / ATCC 700824) (Campylobacter pylori J99).